Reading from the N-terminus, the 163-residue chain is Urease accessory protein UreE (163 aa).

The interval 144–163 (QPEPGAYGGSSAGSHDGHHH) is disordered.

The protein belongs to the UreE family.

Its subcellular location is the cytoplasm. Its function is as follows. Involved in urease metallocenter assembly. Binds nickel. Probably functions as a nickel donor during metallocenter assembly. The chain is Urease accessory protein UreE from Aliivibrio fischeri (strain ATCC 700601 / ES114) (Vibrio fischeri).